The primary structure comprises 317 residues: Dehydrogenase/reductase SDR family protein 7-like (317 aa).

The Cytoplasmic segment spans residues 1 to 10 (MKNLAERSAG). Residues 11 to 31 (SLYWWLLATLFLPIAIPGLVL) traverse the membrane as a helical; Signal-anchor for type II membrane protein segment. At 32 to 317 (KLLTMMKEQR…KKRAEKLNST (286 aa)) the chain is on the peroxisomal side. 52–76 (LITGASSGLGEALAHSFFLAGCKVV) is an NAD(+) binding site. A substrate-binding site is contributed by Ser-189. The Proton acceptor role is filled by Tyr-202.

This sequence belongs to the short-chain dehydrogenases/reductases (SDR) family.

Its subcellular location is the peroxisome membrane. Its function is as follows. Putative oxidoreductase. The sequence is that of Dehydrogenase/reductase SDR family protein 7-like from Anopheles gambiae (African malaria mosquito).